A 144-amino-acid polypeptide reads, in one-letter code: Cysteine desulfuration protein SufE (144 aa).

Catalysis depends on Cys51, which acts as the Cysteine persulfide intermediate.

This sequence belongs to the SufE family. As to quaternary structure, homodimer. Interacts with SufS.

The protein localises to the cytoplasm. It functions in the pathway cofactor biosynthesis; iron-sulfur cluster biosynthesis. Its function is as follows. Participates in cysteine desulfuration mediated by SufS. Cysteine desulfuration mobilizes sulfur from L-cysteine to yield L-alanine and constitutes an essential step in sulfur metabolism for biosynthesis of a variety of sulfur-containing biomolecules. Functions as a sulfur acceptor for SufS, by mediating the direct transfer of the sulfur atom from the S-sulfanylcysteine of SufS, an intermediate product of cysteine desulfuration process. In Wigglesworthia glossinidia brevipalpis, this protein is Cysteine desulfuration protein SufE.